Reading from the N-terminus, the 42-residue chain is Photosystem I reaction center subunit IX (42 aa).

Residues Y7 to I27 traverse the membrane as a helical segment.

The protein belongs to the PsaJ family.

It localises to the plastid. It is found in the chloroplast thylakoid membrane. Functionally, may help in the organization of the PsaE and PsaF subunits. The sequence is that of Photosystem I reaction center subunit IX from Marchantia polymorpha (Common liverwort).